A 148-amino-acid polypeptide reads, in one-letter code: MAHLLLLHGPNLNLLGTREPEVYGRTTLAQIDAALVDRAQAAGHALDCLQSNAEHVLVERIHAAREDGTAYILINPAAFTHTSLALRDALLGVGLPFVEIHLSNPHAREPFRHHSYLSDKADGVICGFGADSYRLALEAVIARLECDA.

The active-site Proton acceptor is the tyrosine 23. Substrate-binding residues include asparagine 75, histidine 81, and aspartate 88. The active-site Proton donor is histidine 101. Residues 102-103 (LS) and arginine 112 contribute to the substrate site.

Belongs to the type-II 3-dehydroquinase family. In terms of assembly, homododecamer.

The enzyme catalyses 3-dehydroquinate = 3-dehydroshikimate + H2O. Its pathway is metabolic intermediate biosynthesis; chorismate biosynthesis; chorismate from D-erythrose 4-phosphate and phosphoenolpyruvate: step 3/7. In terms of biological role, catalyzes a trans-dehydration via an enolate intermediate. In Xanthomonas oryzae pv. oryzae (strain MAFF 311018), this protein is 3-dehydroquinate dehydratase.